A 112-amino-acid chain; its full sequence is UPF0060 membrane protein CMS0846 (112 aa).

4 helical membrane-spanning segments follow: residues 6-26 (VILF…IWQA), 32-52 (PFWW…IATL), 61-81 (ILAA…TVVD), and 87-107 (RWDV…MAAP).

It belongs to the UPF0060 family.

The protein resides in the cell membrane. The chain is UPF0060 membrane protein CMS0846 from Clavibacter sepedonicus (Clavibacter michiganensis subsp. sepedonicus).